We begin with the raw amino-acid sequence, 699 residues long: Elongation factor G (699 aa).

Positions 8–287 (EKLRNIGIVA…AVIDYLPSPI (280 aa)) constitute a tr-type G domain. GTP-binding positions include 17–24 (AHIDAGKT), 85–89 (DTPGH), and 139–142 (NKMD).

This sequence belongs to the TRAFAC class translation factor GTPase superfamily. Classic translation factor GTPase family. EF-G/EF-2 subfamily.

The protein localises to the cytoplasm. Its function is as follows. Catalyzes the GTP-dependent ribosomal translocation step during translation elongation. During this step, the ribosome changes from the pre-translocational (PRE) to the post-translocational (POST) state as the newly formed A-site-bound peptidyl-tRNA and P-site-bound deacylated tRNA move to the P and E sites, respectively. Catalyzes the coordinated movement of the two tRNA molecules, the mRNA and conformational changes in the ribosome. In Aquifex aeolicus (strain VF5), this protein is Elongation factor G (fusA).